The following is a 262-amino-acid chain: Nitrate transport protein NasD (262 aa).

Residues 5–239 enclose the ABC transporter domain; sequence IQVQGVSQRF…RPRNRVQLAD (235 aa). Residue 41 to 48 participates in ATP binding; that stretch reads GHSGCGKS.

Belongs to the ABC transporter superfamily.

The protein localises to the cell membrane. Functionally, probably part of a high-affinity binding-protein-dependent transport system for nitrate. Probably responsible for energy coupling to the transport system. In Klebsiella oxytoca, this protein is Nitrate transport protein NasD (nasD).